The sequence spans 200 residues: LexA repressor (200 aa).

Positions 27–47 (VREICNAVELRSTSTVHGHLK) form a DNA-binding region, H-T-H motif. Catalysis depends on for autocatalytic cleavage activity residues Ser-124 and Lys-161.

Belongs to the peptidase S24 family. As to quaternary structure, homodimer.

It catalyses the reaction Hydrolysis of Ala-|-Gly bond in repressor LexA.. Its function is as follows. Represses a number of genes involved in the response to DNA damage (SOS response), including recA and lexA. In the presence of single-stranded DNA, RecA interacts with LexA causing an autocatalytic cleavage which disrupts the DNA-binding part of LexA, leading to derepression of the SOS regulon and eventually DNA repair. This is LexA repressor from Clostridium tetani (strain Massachusetts / E88).